The primary structure comprises 277 residues: Putative phosphoenolpyruvate synthase regulatory protein (277 aa).

157–164 (GVSRSGKT) lines the ADP pocket.

Belongs to the pyruvate, phosphate/water dikinase regulatory protein family. PSRP subfamily.

It carries out the reaction [pyruvate, water dikinase] + ADP = [pyruvate, water dikinase]-phosphate + AMP + H(+). The catalysed reaction is [pyruvate, water dikinase]-phosphate + phosphate + H(+) = [pyruvate, water dikinase] + diphosphate. In terms of biological role, bifunctional serine/threonine kinase and phosphorylase involved in the regulation of the phosphoenolpyruvate synthase (PEPS) by catalyzing its phosphorylation/dephosphorylation. This is Putative phosphoenolpyruvate synthase regulatory protein from Aromatoleum aromaticum (strain DSM 19018 / LMG 30748 / EbN1) (Azoarcus sp. (strain EbN1)).